Reading from the N-terminus, the 152-residue chain is Nucleoside diphosphate kinase (152 aa).

ATP-binding residues include Lys-11, Phe-59, Arg-87, Thr-93, Arg-104, and Asn-114. The active-site Pros-phosphohistidine intermediate is His-117.

The protein belongs to the NDK family. As to quaternary structure, homotetramer. It depends on Mg(2+) as a cofactor.

The protein localises to the cytoplasm. The enzyme catalyses a 2'-deoxyribonucleoside 5'-diphosphate + ATP = a 2'-deoxyribonucleoside 5'-triphosphate + ADP. It carries out the reaction a ribonucleoside 5'-diphosphate + ATP = a ribonucleoside 5'-triphosphate + ADP. Functionally, major role in the synthesis of nucleoside triphosphates other than ATP. The ATP gamma phosphate is transferred to the NDP beta phosphate via a ping-pong mechanism, using a phosphorylated active-site intermediate. The sequence is that of Nucleoside diphosphate kinase from Prochlorococcus marinus (strain MIT 9301).